The following is a 497-amino-acid chain: Probable pectinesterase 30 (497 aa).

Positions 1-21 (MLVKVFSFFILMIIMVIGVSK) are cleaved as a signal peptide. 2 N-linked (GlcNAc...) asparagine glycosylation sites follow: Asn238 and Asn254. Thr263 contacts substrate. Asp316 acts as the Proton donor in catalysis. Residues Cys330 and Cys350 are joined by a disulfide bond. Asp337 acts as the Nucleophile in catalysis. Asn385 carries an N-linked (GlcNAc...) asparagine glycan. Substrate is bound by residues Arg403 and Trp405.

Belongs to the pectinesterase family. Expressed in siliques.

The protein resides in the secreted. The protein localises to the cell wall. It carries out the reaction [(1-&gt;4)-alpha-D-galacturonosyl methyl ester](n) + n H2O = [(1-&gt;4)-alpha-D-galacturonosyl](n) + n methanol + n H(+). Its pathway is glycan metabolism; pectin degradation; 2-dehydro-3-deoxy-D-gluconate from pectin: step 1/5. Its function is as follows. Acts in the modification of cell walls via demethylesterification of cell wall pectin. The sequence is that of Probable pectinesterase 30 (PME30) from Arabidopsis thaliana (Mouse-ear cress).